A 308-amino-acid polypeptide reads, in one-letter code: S-crystallin SL18 (308 aa).

The GST N-terminal domain occupies 2–80; it reads PKYTLYYFNS…YLARQFGFYG (79 aa). Positions 165–205 are disordered; it reads EMRSQDSMVEPPSQKLSPELESQSSLCSERPQCGPPDPMMG. Over residues 178–191 the composition is skewed to polar residues; the sequence is QKLSPELESQSSLC. The 124-residue stretch at 185 to 308 folds into the GST C-terminal domain; it reads ESQSSLCSER…YFTLRNYTDF (124 aa).

It belongs to the GST superfamily. Lens.

Its function is as follows. S-crystallins are structural components of squids and octopi eye lens. Contains relatively little if any GST activity. This Nototodarus sloanii (Wellington flying squid) protein is S-crystallin SL18.